A 154-amino-acid polypeptide reads, in one-letter code: 6,7-dimethyl-8-ribityllumazine synthase (154 aa).

Residues phenylalanine 23, 57-59, and 81-83 contribute to the 5-amino-6-(D-ribitylamino)uracil site; these read AFE and AVI. Residue 86–87 coordinates (2S)-2-hydroxy-3-oxobutyl phosphate; the sequence is ST. Histidine 89 functions as the Proton donor in the catalytic mechanism. A 5-amino-6-(D-ribitylamino)uracil-binding site is contributed by phenylalanine 114. Position 128 (arginine 128) interacts with (2S)-2-hydroxy-3-oxobutyl phosphate.

It belongs to the DMRL synthase family.

It carries out the reaction (2S)-2-hydroxy-3-oxobutyl phosphate + 5-amino-6-(D-ribitylamino)uracil = 6,7-dimethyl-8-(1-D-ribityl)lumazine + phosphate + 2 H2O + H(+). It participates in cofactor biosynthesis; riboflavin biosynthesis; riboflavin from 2-hydroxy-3-oxobutyl phosphate and 5-amino-6-(D-ribitylamino)uracil: step 1/2. Its function is as follows. Catalyzes the formation of 6,7-dimethyl-8-ribityllumazine by condensation of 5-amino-6-(D-ribitylamino)uracil with 3,4-dihydroxy-2-butanone 4-phosphate. This is the penultimate step in the biosynthesis of riboflavin. The protein is 6,7-dimethyl-8-ribityllumazine synthase of Campylobacter jejuni subsp. doylei (strain ATCC BAA-1458 / RM4099 / 269.97).